The following is a 593-amino-acid chain: MFTAKNPFEDIVLKATSDELTSENWELNLEVCDKVSSGGDTAARNCIAAIQKRLVHRNANVQLYALTLADAVAKNCGLAAHQEIASRSFTQTLARICLDRNTHSTVKKRCSALVKEWAGEFDDQSLGLMKETYESLKSQDAVAEDETPAEPPREPTSEQLRAEDEELRRALELSIQDQGGRNAWPSYNTEQAETSGSSAPAAASSSSSAYQPTSQSLAPAQQQQQQQHDANHTNGTSSSAHAQPLSAATPPAVASRVRALYDFSPTEPGELAFSRGEVIRVLDSVYEHWWRGEVRGEAGIFPVNYVEVLPDPTPDELQREAQMEARIFSQAADIDRLLSKLRSLDPARDNLADDDELQELYQKSLAMRPKIVKLIDRYSNKITELKAMNDKFVHARGSFDEMMEQSLSRYNPGGHSSQDYLRPRPELQQHFSASSADYAQHPSYPTAHAYSVQQAQSASSAHDQIQYPFNPEQRHGYAQSAGAEPADPSYVQGSRLPSGPQPPQQITMAHQQQPHEQQYSSAPHDDEKRRLFERARAESEAFQQQHFQSQAHTSRSGYSGAYPSQPDASVLNQQMGNMNIGGSSSYASHPTGH.

One can recognise a VHS domain in the interval 15 to 144; that stretch reads ATSDELTSEN…SLKSQDAVAE (130 aa). The interval 136–251 is disordered; that stretch reads LKSQDAVAED…AQPLSAATPP (116 aa). The span at 151 to 171 shows a compositional bias: basic and acidic residues; it reads PPREPTSEQLRAEDEELRRAL. A UIM domain is found at 162-181; the sequence is AEDEELRRALELSIQDQGGR. Polar residues predominate over residues 175 to 193; it reads IQDQGGRNAWPSYNTEQAE. A compositionally biased stretch (low complexity) spans 194–227; that stretch reads TSGSSAPAAASSSSSAYQPTSQSLAPAQQQQQQQ. Residues 232 to 241 are compositionally biased toward polar residues; sequence HTNGTSSSAH. Residues 252–311 form the SH3 domain; the sequence is AVASRVRALYDFSPTEPGELAFSRGEVIRVLDSVYEHWWRGEVRGEAGIFPVNYVEVLPD. Residues 474-593 form a disordered region; that stretch reads RHGYAQSAGA…SSYASHPTGH (120 aa). Polar residues predominate over residues 504–521; the sequence is QQITMAHQQQPHEQQYSS. The span at 523 to 539 shows a compositional bias: basic and acidic residues; the sequence is PHDDEKRRLFERARAES. Residues 540-552 are compositionally biased toward low complexity; the sequence is EAFQQQHFQSQAH. Over residues 566 to 593 the composition is skewed to polar residues; that stretch reads PDASVLNQQMGNMNIGGSSSYASHPTGH.

Belongs to the STAM family. Component of the ESCRT-0 complex composed of HSE1 and VPS27.

Its subcellular location is the endosome membrane. Its function is as follows. Component of the ESCRT-0 complex which is the sorting receptor for ubiquitinated cargo proteins at the multivesicular body (MVB). This chain is Class E vacuolar protein-sorting machinery protein HSE1 (HSE1), found in Mycosarcoma maydis (Corn smut fungus).